A 122-amino-acid chain; its full sequence is MIQQESRLKVADNSGARELLTIKVLGGSGRKYANIGDIIVATVKQATPGGVVKKGDVVKAVVVRTKSGARRPDGSYIKFDENAAVIIKDDKSPRGTRIFGPVARELRDSNFMKIVSLAPEVL.

Belongs to the universal ribosomal protein uL14 family. In terms of assembly, part of the 50S ribosomal subunit. Forms a cluster with proteins L3 and L19. In the 70S ribosome, L14 and L19 interact and together make contacts with the 16S rRNA in bridges B5 and B8.

Its function is as follows. Binds to 23S rRNA. Forms part of two intersubunit bridges in the 70S ribosome. The protein is Large ribosomal subunit protein uL14 of Bacillus anthracis (strain A0248).